The primary structure comprises 247 residues: Methionyl-tRNA formyltransferase (247 aa).

This sequence belongs to the Fmt family.

It catalyses the reaction L-methionyl-tRNA(fMet) + (6R)-10-formyltetrahydrofolate = N-formyl-L-methionyl-tRNA(fMet) + (6S)-5,6,7,8-tetrahydrofolate + H(+). Its function is as follows. Attaches a formyl group to the free amino group of methionyl-tRNA(fMet). The formyl group appears to play a dual role in the initiator identity of N-formylmethionyl-tRNA by promoting its recognition by IF2 and preventing the misappropriation of this tRNA by the elongation apparatus. The chain is Methionyl-tRNA formyltransferase (fmt) from Vibrio alginolyticus.